The following is a 368-amino-acid chain: Peptide chain release factor 2 (368 aa).

The segment at glutamate 36–serine 56 is disordered. At glutamine 250 the chain carries N5-methylglutamine.

It belongs to the prokaryotic/mitochondrial release factor family. Post-translationally, methylated by PrmC. Methylation increases the termination efficiency of RF2.

It localises to the cytoplasm. In terms of biological role, peptide chain release factor 2 directs the termination of translation in response to the peptide chain termination codons UGA and UAA. This chain is Peptide chain release factor 2, found in Corynebacterium aurimucosum (strain ATCC 700975 / DSM 44827 / CIP 107346 / CN-1) (Corynebacterium nigricans).